The primary structure comprises 228 residues: MSVSEIFVELQGFLAAEQDIREEIRKVVQSLEQTAREILTLLQGVHQGAGFQDIPKRCLKAREHFGTVKTHLTSLKTKFPAEQYYRFHEHWRFVLQRLVFLAAFVVYLETETLVTREAVTEILGMEPDREKGFHLDVEDYLSGVLILASELSRLSVNSVTAGDYSRPLHISTFINELDSGFRLLNLKNDSLRKRYDGLKYDVKKVEEVVYDLSIRGFNKETAAACVEK.

Positions 86-90 are DNA/RNA binding; that stretch reads RFHEH. The leucine-zipper stretch occupies residues 177 to 198; that stretch reads LDSGFRLLNLKNDSLRKRYDGL. Residue Lys187 is modified to N6-acetyllysine. Ser190 bears the Phosphoserine mark. Lys199 bears the N6-acetyllysine mark.

This sequence belongs to the translin family. Ring-shaped heterooctamer of six TSN and two TSNAX subunits, DNA/RNA binding occurs inside the ring.

It is found in the cytoplasm. The protein localises to the nucleus. In terms of biological role, DNA-binding protein that specifically recognizes consensus sequences at the breakpoint junctions in chromosomal translocations, mostly involving immunoglobulin (Ig)/T-cell receptor gene segments. Seems to recognize single-stranded DNA ends generated by staggered breaks occurring at recombination hot spots. Functionally, exhibits both single-stranded and double-stranded endoribonuclease activity. May act as an activator of RNA-induced silencing complex (RISC) by facilitating endonucleolytic cleavage of the siRNA passenger strand. The polypeptide is Translin (TSN) (Pongo abelii (Sumatran orangutan)).